The sequence spans 560 residues: Membrane protein insertase YidC (560 aa).

A helical membrane pass occupies residues 1–21; that stretch reads MDIKRTILIAALAVVSYVMVL. The tract at residues 42 to 66 is disordered; the sequence is VAPGLPDGVPAGNNGASADVPSANA. The next 5 membrane-spanning stretches (helical) occupy residues 341–361, 367–387, 437–457, 468–488, and 515–535; these read LELTVDYGFLWFIAQPIFWLL, LLGNWGWSIIVLTMLIKGLFF, LGGCLPILVQMPVFLALYWVL, WMLWITDLSIKDPFFILPIIM, and PIIFTFFFLWFPAGLVLYWVV.

The protein belongs to the OXA1/ALB3/YidC family. Type 1 subfamily. In terms of assembly, interacts with the Sec translocase complex via SecD. Specifically interacts with transmembrane segments of nascent integral membrane proteins during membrane integration.

Its subcellular location is the cell inner membrane. Functionally, required for the insertion and/or proper folding and/or complex formation of integral membrane proteins into the membrane. Involved in integration of membrane proteins that insert both dependently and independently of the Sec translocase complex, as well as at least some lipoproteins. Aids folding of multispanning membrane proteins. In Pseudomonas putida (strain GB-1), this protein is Membrane protein insertase YidC.